Reading from the N-terminus, the 387-residue chain is Protein RecA (387 aa).

Residue 78-85 coordinates ATP; sequence GPESSGKT. The span at 350–369 shows a compositional bias: basic and acidic residues; sequence QTREVKSIERDPKETKETKS. The tract at residues 350–387 is disordered; the sequence is QTREVKSIERDPKETKETKSKQPVSFSTEAEVDIAVGE.

The protein belongs to the RecA family.

Its subcellular location is the cytoplasm. Can catalyze the hydrolysis of ATP in the presence of single-stranded DNA, the ATP-dependent uptake of single-stranded DNA by duplex DNA, and the ATP-dependent hybridization of homologous single-stranded DNAs. It interacts with LexA causing its activation and leading to its autocatalytic cleavage. The chain is Protein RecA from Leptospira meyeri.